The sequence spans 353 residues: GTPase Obg (353 aa).

An Obg domain is found at 1–159; the sequence is MKFLDEAKVY…RWIWLRLKLI (159 aa). In terms of domain architecture, OBG-type G spans 160-327; it reads ADAGLVGLPN…ALRALAAVIG (168 aa). Residues 166–173, 191–195, 212–215, 279–282, and 308–310 each bind GTP; these read GLPNAGKS, FTTLH, DIPG, NKID, and SGI. S173 and T193 together coordinate Mg(2+). The interval 332 to 353 is disordered; that stretch reads SDKAKGAADNAANAEPWAPQDA.

This sequence belongs to the TRAFAC class OBG-HflX-like GTPase superfamily. OBG GTPase family. As to quaternary structure, monomer. Mg(2+) serves as cofactor.

It is found in the cytoplasm. In terms of biological role, an essential GTPase which binds GTP, GDP and possibly (p)ppGpp with moderate affinity, with high nucleotide exchange rates and a fairly low GTP hydrolysis rate. Plays a role in control of the cell cycle, stress response, ribosome biogenesis and in those bacteria that undergo differentiation, in morphogenesis control. This is GTPase Obg from Rhodopseudomonas palustris (strain HaA2).